The primary structure comprises 143 residues: MAKKIQAYIKLQVKAGQANPSPPVGPALGQHGVNIMEFCKAFNARTQGQEAGLPTPVIITVYSDRSFTFETKSTPASVLLKKAAGLTSGSARPNTVKVGTVTRAQLEDIAKAKQADLTAADLDAAVRTIAGSARSMGLNVEGV.

This sequence belongs to the universal ribosomal protein uL11 family. Part of the ribosomal stalk of the 50S ribosomal subunit. Interacts with L10 and the large rRNA to form the base of the stalk. L10 forms an elongated spine to which L12 dimers bind in a sequential fashion forming a multimeric L10(L12)X complex. In terms of processing, one or more lysine residues are methylated.

Forms part of the ribosomal stalk which helps the ribosome interact with GTP-bound translation factors. This Pseudomonas putida (strain ATCC 700007 / DSM 6899 / JCM 31910 / BCRC 17059 / LMG 24140 / F1) protein is Large ribosomal subunit protein uL11.